The primary structure comprises 146 residues: Catabolic 3-dehydroquinase (146 aa).

The active-site Proton acceptor is the Tyr24. Residues Asn78, His84, and Asp91 each contribute to the substrate site. Residue His104 is the Proton donor of the active site. Residues 105-106 (IT) and Arg115 contribute to the substrate site.

The protein belongs to the type-II 3-dehydroquinase family. Homododecamer. Adopts a ring-like structure, composed of an arrangement of two hexameric rings stacked on top of one another.

The enzyme catalyses 3-dehydroquinate = 3-dehydroshikimate + H2O. It participates in aromatic compound metabolism; 3,4-dihydroxybenzoate biosynthesis; 3,4-dihydroxybenzoate from 3-dehydroquinate: step 1/2. Its function is as follows. Is involved in the catabolism of quinate. Allows the utilization of quinate as carbon source via the beta-ketoadipate pathway. The polypeptide is Catabolic 3-dehydroquinase (Scheffersomyces stipitis (strain ATCC 58785 / CBS 6054 / NBRC 10063 / NRRL Y-11545) (Yeast)).